A 503-amino-acid polypeptide reads, in one-letter code: Carboxyl-terminal PDZ ligand of neuronal nitric oxide synthase protein (503 aa).

The region spanning 26–191 (FQHGISFEAK…ESERNSDGSG (166 aa)) is the PID domain. The disordered stretch occupies residues 170–212 (HTQQNADGQEDGESERNSDGSGDPGRQLTGAERVSTAAAEETD). Residues Ser183, Ser187, Ser190, and Ser262 each carry the phosphoserine modification. Residues 318 to 359 (AAEAAARLEAQARVHQLLLQNKDMLQHISLLVKQVQELELKL) adopt a coiled-coil conformation. 4 positions are modified to phosphoserine: Ser367, Ser370, Ser397, and Ser413. Positions 491 to 503 (QELGDSLDDEIAV) are interaction with NOS1. The PDZ-binding motif lies at 501–503 (IAV).

As to quaternary structure, interacts with the PDZ domain of NOS1 or the second PDZ domain of DLG4 through its C-terminus. Interacts with RASD1 and SYN1, SYN2 and SYN3 via its PID domain. Forms a ternary complex with NOS1 and SYN1. Forms a ternary complex with NOS1 and RASD1.

It localises to the cell projection. Its subcellular location is the filopodium. The protein localises to the podosome. Adapter protein involved in neuronal nitric-oxide (NO) synthesis regulation via its association with nNOS/NOS1. The complex formed with NOS1 and synapsins is necessary for specific NO and synapsin functions at a presynaptic level. Mediates an indirect interaction between NOS1 and RASD1 leading to enhance the ability of NOS1 to activate RASD1. Competes with DLG4 for interaction with NOS1, possibly affecting NOS1 activity by regulating the interaction between NOS1 and DLG4. In kidney podocytes, plays a role in podosomes and filopodia formation through CDC42 activation. This Mus musculus (Mouse) protein is Carboxyl-terminal PDZ ligand of neuronal nitric oxide synthase protein.